Reading from the N-terminus, the 125-residue chain is MKYGEKIVSEFDVEKDLEIWPNEHKRDYLIKMTLPEFSCLCPRSGYPDYATIYLEYTPNERVVELKAIKLYINSFRDRHISHENSANEIYTVLERKLKPKYMKIVADYNPRGNVHTVIEIDSSKL.

The active-site Thioimide intermediate is the Cys41. The active-site Proton donor is Asp48. Substrate is bound by residues 63–65 and 82–83; these read VEL and HE.

The protein belongs to the GTP cyclohydrolase I family. QueF type 1 subfamily.

It localises to the cytoplasm. The catalysed reaction is 7-aminomethyl-7-carbaguanine + 2 NADP(+) = 7-cyano-7-deazaguanine + 2 NADPH + 3 H(+). It participates in tRNA modification; tRNA-queuosine biosynthesis. Catalyzes the NADPH-dependent reduction of 7-cyano-7-deazaguanine (preQ0) to 7-aminomethyl-7-deazaguanine (preQ1). This chain is NADPH-dependent 7-cyano-7-deazaguanine reductase, found in Sulfurimonas denitrificans (strain ATCC 33889 / DSM 1251) (Thiomicrospira denitrificans (strain ATCC 33889 / DSM 1251)).